The chain runs to 257 residues: Large ribosomal subunit protein uL2 (257 aa).

Positions 207-231 (VEHPFGGGNHQHIGKPSTIRRDAPA) are disordered.

This sequence belongs to the universal ribosomal protein uL2 family. In terms of assembly, component of the large ribosomal subunit.

It is found in the cytoplasm. In terms of biological role, component of the large ribosomal subunit. The ribosome is a large ribonucleoprotein complex responsible for the synthesis of proteins in the cell. The sequence is that of Large ribosomal subunit protein uL2 (rpl8) from Xenopus tropicalis (Western clawed frog).